The chain runs to 406 residues: 4-hydroxy-3-methylbut-2-en-1-yl diphosphate synthase (ferredoxin) (406 aa).

Residues Cys-315, Cys-318, Cys-349, and Glu-356 each coordinate [4Fe-4S] cluster.

This sequence belongs to the IspG family. The cofactor is [4Fe-4S] cluster.

The catalysed reaction is (2E)-4-hydroxy-3-methylbut-2-enyl diphosphate + 2 oxidized [2Fe-2S]-[ferredoxin] + H2O = 2-C-methyl-D-erythritol 2,4-cyclic diphosphate + 2 reduced [2Fe-2S]-[ferredoxin] + H(+). It functions in the pathway isoprenoid biosynthesis; isopentenyl diphosphate biosynthesis via DXP pathway; isopentenyl diphosphate from 1-deoxy-D-xylulose 5-phosphate: step 5/6. In terms of biological role, converts 2C-methyl-D-erythritol 2,4-cyclodiphosphate (ME-2,4cPP) into 1-hydroxy-2-methyl-2-(E)-butenyl 4-diphosphate. This is 4-hydroxy-3-methylbut-2-en-1-yl diphosphate synthase (ferredoxin) from Trichodesmium erythraeum (strain IMS101).